A 263-amino-acid polypeptide reads, in one-letter code: Methylesterase 4 (263 aa).

Residue serine 84 is the Acyl-ester intermediate of the active site. Catalysis depends on charge relay system residues aspartate 213 and histidine 241.

This sequence belongs to the AB hydrolase superfamily. Methylesterase family.

It carries out the reaction methyl salicylate + H2O = salicylate + methanol + H(+). It participates in plant hormone biosynthesis. With respect to regulation, esterase activity is down-regulated by salicylic acid (SA). In terms of biological role, methylesterase shown to have carboxylesterase activity and methyl salicylate (MeSA) esterase activity in vitro. This is Methylesterase 4 from Arabidopsis thaliana (Mouse-ear cress).